Here is a 402-residue protein sequence, read N- to C-terminus: Protein RETARDED ROOT GROWTH-LIKE (402 aa).

The chain crosses the membrane as a helical span at residues 375–395; it reads SATLEWLIIILISMEIAISFY.

The protein belongs to the RMD1/sif2 family. As to expression, highly expressed in germinating seeds and developing seedlings. Also present at low levels in seedlings, roots, leaves, stems and flowers, and barely in siliques.

The protein resides in the mitochondrion membrane. Its subcellular location is the mitochondrion. Functionally, mediates abscisic acid (ABA) signal transduction through mitochondrial retrograde regulation involving ABI4 during seed germination and seedling growth, and leading to the production of reactive oxygen species (ROS) by the alternative respiratory pathway. Required for the maintenance of mitochondrial structure. The sequence is that of Protein RETARDED ROOT GROWTH-LIKE from Arabidopsis thaliana (Mouse-ear cress).